We begin with the raw amino-acid sequence, 180 residues long: Protein YOP1 (180 aa).

Ser2 bears the N-acetylserine mark. Residues Ser2 to Thr17 form an interaction with YIP1 region. Residues Ser2–Pro35 are Cytoplasmic-facing. Residues Lys36 to Val55 traverse the membrane as a helical segment. Residues Gly56–Gly57 lie on the Lumenal side of the membrane. Residues Val58 to Ala78 traverse the membrane as a helical segment. Over Leu79 to Thr88 the chain is Cytoplasmic. The chain crosses the membrane as a helical span at residues Gln89 to Phe105. Residues Trp106–Lys108 lie on the Lumenal side of the membrane. The helical transmembrane segment at Ala109 to Tyr127 threads the bilayer. Residues Ile128–His180 are Cytoplasmic-facing.

The protein belongs to the DP1 family. As to quaternary structure, oligomer. Interacts with YIP1.

It is found in the endoplasmic reticulum membrane. It localises to the golgi apparatus membrane. Functionally, required to generate and maintain the structure of the tubular endoplasmic reticulum network and the vacuole. Induces high curvature in membranes and causes membrane tubule formation. Involved in membrane/vesicle trafficking. The polypeptide is Protein YOP1 (YOP1) (Saccharomyces cerevisiae (strain ATCC 204508 / S288c) (Baker's yeast)).